The chain runs to 264 residues: GATA transcription factor 2 (264 aa).

A compositionally biased stretch (low complexity) spans Ser-29–Ser-42. Disordered stretches follow at residues Ser-29–Pro-57 and Asn-96–Trp-192. Over residues Thr-101–Ser-110 the composition is skewed to polar residues. The Nuclear localization signal motif lies at Lys-114–Arg-121. Positions Ser-155–Arg-164 are enriched in gly residues. The GATA-type zinc finger occupies Gly-175–Leu-229.

This sequence belongs to the type IV zinc-finger family. Class A subfamily. Mostly expressed in roots. Also expressed in flowers and leaves, and to a lower extent in stems.

The protein localises to the nucleus. In terms of biological role, transcriptional activator that specifically binds 5'-GATA-3' or 5'-GAT-3' motifs within gene promoters. May be involved in the regulation of some light-responsive genes. The chain is GATA transcription factor 2 (GATA2) from Arabidopsis thaliana (Mouse-ear cress).